The primary structure comprises 108 residues: Integration host factor subunit alpha (108 aa).

Belongs to the bacterial histone-like protein family. In terms of assembly, heterodimer of an alpha and a beta chain.

Its function is as follows. This protein is one of the two subunits of integration host factor, a specific DNA-binding protein that functions in genetic recombination as well as in transcriptional and translational control. The polypeptide is Integration host factor subunit alpha (Rhodopseudomonas palustris (strain BisB18)).